The primary structure comprises 489 residues: Glutamyl-tRNA(Gln) amidotransferase subunit A (489 aa).

Catalysis depends on charge relay system residues lysine 79 and serine 158. The active-site Acyl-ester intermediate is serine 182.

It belongs to the amidase family. GatA subfamily. In terms of assembly, heterotrimer of A, B and C subunits.

The enzyme catalyses L-glutamyl-tRNA(Gln) + L-glutamine + ATP + H2O = L-glutaminyl-tRNA(Gln) + L-glutamate + ADP + phosphate + H(+). In terms of biological role, allows the formation of correctly charged Gln-tRNA(Gln) through the transamidation of misacylated Glu-tRNA(Gln) in organisms which lack glutaminyl-tRNA synthetase. The reaction takes place in the presence of glutamine and ATP through an activated gamma-phospho-Glu-tRNA(Gln). The protein is Glutamyl-tRNA(Gln) amidotransferase subunit A of Anaplasma marginale (strain Florida).